The chain runs to 169 residues: Aspartic protease inhibitor 3 (169 aa).

The N-linked (GlcNAc...) asparagine glycan is linked to asparagine 1. 2 cysteine pairs are disulfide-bonded: cysteine 30/cysteine 75 and cysteine 124/cysteine 134.

This sequence belongs to the protease inhibitor I3 (leguminous Kunitz-type inhibitor) family.

The protein localises to the vacuole. Inhibitor of cathepsin D (aspartic protease). May also inhibit trypsin and chymotrypsin (serine proteases). Protects the plant by inhibiting proteases of invading organisms. This chain is Aspartic protease inhibitor 3, found in Solanum tuberosum (Potato).